A 187-amino-acid polypeptide reads, in one-letter code: UPF0200 protein APE_1753.1 (187 aa).

ATP is bound at residue 13–20; that stretch reads GLPGSGKS.

This sequence belongs to the UPF0200 family.

The polypeptide is UPF0200 protein APE_1753.1 (Aeropyrum pernix (strain ATCC 700893 / DSM 11879 / JCM 9820 / NBRC 100138 / K1)).